The sequence spans 101 residues: Large ribosomal subunit protein bL21 (101 aa).

The protein belongs to the bacterial ribosomal protein bL21 family. As to quaternary structure, part of the 50S ribosomal subunit. Contacts protein L20.

This protein binds to 23S rRNA in the presence of protein L20. The polypeptide is Large ribosomal subunit protein bL21 (Beutenbergia cavernae (strain ATCC BAA-8 / DSM 12333 / CCUG 43141 / JCM 11478 / NBRC 16432 / NCIMB 13614 / HKI 0122)).